Reading from the N-terminus, the 179-residue chain is Large ribosomal subunit protein uL5 (179 aa).

The protein belongs to the universal ribosomal protein uL5 family. In terms of assembly, part of the 50S ribosomal subunit; part of the 5S rRNA/L5/L18/L25 subcomplex. Contacts the 5S rRNA and the P site tRNA. Forms a bridge to the 30S subunit in the 70S ribosome.

Functionally, this is one of the proteins that bind and probably mediate the attachment of the 5S RNA into the large ribosomal subunit, where it forms part of the central protuberance. In the 70S ribosome it contacts protein S13 of the 30S subunit (bridge B1b), connecting the 2 subunits; this bridge is implicated in subunit movement. Contacts the P site tRNA; the 5S rRNA and some of its associated proteins might help stabilize positioning of ribosome-bound tRNAs. This is Large ribosomal subunit protein uL5 from Bordetella avium (strain 197N).